The chain runs to 46 residues: Phospholipase A2 superbin c (46 aa).

Ca(2+) contacts are provided by tyrosine 28, glycine 30, and glycine 32. An intrachain disulfide couples cysteine 29 to cysteine 45.

Ca(2+) serves as cofactor. In terms of tissue distribution, expressed by the venom gland.

The protein localises to the secreted. It carries out the reaction a 1,2-diacyl-sn-glycero-3-phosphocholine + H2O = a 1-acyl-sn-glycero-3-phosphocholine + a fatty acid + H(+). In terms of biological role, snake venom phospholipase A2 (PLA2) that inhibits collagen-induced platelet aggregation. In terms of inhibition of platelet aggregation, superbin c is more potent as superbin d. PLA2 catalyzes the calcium-dependent hydrolysis of the 2-acyl groups in 3-sn-phosphoglycerides. The chain is Phospholipase A2 superbin c from Austrelaps superbus (Lowland copperhead snake).